Reading from the N-terminus, the 346-residue chain is MEADILDGKLKRVEVSKKGLVNCNQVDVNQLVPIKYKWAWEHYLNGCANNWLPTEVPMARDIELWKSDELSEDERRVILLNLGFFSTAESLVGNNIVLAIFKHITNPEARQYLLRQAFEEAVHTHTFLYICESLGLDEGEVFNAYNERASIRAKDDFQMTLTVDVLDPNFSVQSSEGLGQFIKNLVGYYIIMEGIFFYSGFVMILSFHRQNKMTGIGEQYQYILRDETIHLNFGIDLINGIKEENPEVWTTELQEEIVALIEKAVELEIEYAKDCLPRGILGLRSSMFIDYVRHIADRRLERIGLKPIYHSRNPFPWMSETMDLNKEKNFFETRVTEYQTAGNLSW.

Fe cation-binding residues include E89, E120, and H123. Y129 is an active-site residue. Positions 193, 227, and 230 each coordinate Fe cation.

This sequence belongs to the ribonucleoside diphosphate reductase small chain family. In terms of assembly, tetramer of two alpha and two beta subunits. Fe cation is required as a cofactor.

It carries out the reaction a 2'-deoxyribonucleoside 5'-diphosphate + [thioredoxin]-disulfide + H2O = a ribonucleoside 5'-diphosphate + [thioredoxin]-dithiol. Provides the precursors necessary for DNA synthesis. Catalyzes the biosynthesis of deoxyribonucleotides from the corresponding ribonucleotides. The chain is Ribonucleoside-diphosphate reductase subunit beta (nrdB) from Chlamydia pneumoniae (Chlamydophila pneumoniae).